We begin with the raw amino-acid sequence, 455 residues long: Carbamoyl phosphate synthase arginine-specific small chain (455 aa).

The N-terminal 28 residues, Met1–Met28, are a transit peptide targeting the mitochondrion. The Glutamine amidotransferase type-1 domain occupies His219–Asn406. Residue Cys295 is the Nucleophile of the active site. Active-site residues include His379 and Glu381.

It belongs to the CarA family. Heterodimer composed of 2 chains; the small (or glutamine) chain promotes the hydrolysis of glutamine to ammonia, which is used by the large (or ammonia) chain to synthesize carbamoyl phosphate.

Its subcellular location is the mitochondrion matrix. It carries out the reaction hydrogencarbonate + L-glutamine + 2 ATP + H2O = carbamoyl phosphate + L-glutamate + 2 ADP + phosphate + 2 H(+). The enzyme catalyses L-glutamine + H2O = L-glutamate + NH4(+). It participates in amino-acid biosynthesis; L-arginine biosynthesis; carbamoyl phosphate from bicarbonate: step 1/1. Its function is as follows. Small subunit of the arginine-specific carbamoyl phosphate synthase (CPSase). CPSase catalyzes the formation of carbamoyl phosphate from the ammonia moiety of glutamine, carbonate, and phosphate donated by ATP, the first step of the arginine biosynthetic pathway. The small subunit (glutamine amidotransferase) binds and cleaves glutamine to supply the large subunit with the substrate ammonia. This Aspergillus clavatus (strain ATCC 1007 / CBS 513.65 / DSM 816 / NCTC 3887 / NRRL 1 / QM 1276 / 107) protein is Carbamoyl phosphate synthase arginine-specific small chain (cpa1).